We begin with the raw amino-acid sequence, 140 residues long: MTCTLRLTVAALVLLGICHLSRPVAAYQKCARYWYCWLPYDIERDRYDDGYRLCCYCRNAWTPWQCREDEQFERLRCGSRYYTLCCYTEDDNGNGNGNGNGYGNGNGNGNGNNYLKYLFGGNGNGNGEFWEEYIDERYDK.

Residues 1-26 (MTCTLRLTVAALVLLGICHLSRPVAA) form the signal peptide.

Belongs to the N16 matrix protein family. Heterooligomer; disulfide-linked. Pif97, Pif80, N16 and other proteins form a complex. As to expression, component of conchiolin, the organic matrix of nacre. Only expressed in the dorsal region of the mantle.

The protein localises to the secreted. It is found in the extracellular space. The protein resides in the extracellular matrix. May be specifically involved in the formation of the nacreous layer. This Margaritifera margaritifera (Freshwater pearl mussel) protein is Perlin matrix protein.